The primary structure comprises 231 residues: Probable calcium-binding protein CML21 (231 aa).

4 EF-hand domains span residues 54–89, 90–125, 145–180, and 181–216; these read DGLRNCKAIFQEFDEDSNGSIDHTELKNCIRKLEIS, FDEEEINDLFKACDINEDMGITFTEFIVLLCLVYLL, PTFETLVDTFVFLDENKDGYVSREEMVRAIDESGER, and SSGRIAMKRFEEMDWDKNGMVNFKEFLFAFTQWVGI. Ca(2+) is bound by residues D67, D69, N71, S73, and E78. Residues D158, N160, D162, Y164, E169, D194, D196, N198, M200, and E205 each coordinate Ca(2+).

Its function is as follows. Potential calcium sensor. The protein is Probable calcium-binding protein CML21 (CML21) of Arabidopsis thaliana (Mouse-ear cress).